Reading from the N-terminus, the 401-residue chain is Argininosuccinate synthase (401 aa).

An ATP-binding site is contributed by 9–17 (AYSGGLDTS). An L-citrulline-binding site is contributed by Tyr-86. Gly-116 contributes to the ATP binding site. The L-aspartate site is built by Thr-118, Asn-122, and Asp-123. Asn-122 contacts L-citrulline. Residues Arg-126, Ser-174, Ser-183, Glu-259, and Tyr-271 each coordinate L-citrulline.

The protein belongs to the argininosuccinate synthase family. Type 1 subfamily. As to quaternary structure, homotetramer.

It is found in the cytoplasm. The enzyme catalyses L-citrulline + L-aspartate + ATP = 2-(N(omega)-L-arginino)succinate + AMP + diphosphate + H(+). The protein operates within amino-acid biosynthesis; L-arginine biosynthesis; L-arginine from L-ornithine and carbamoyl phosphate: step 2/3. The protein is Argininosuccinate synthase of Bacillus mycoides (strain KBAB4) (Bacillus weihenstephanensis).